A 296-amino-acid polypeptide reads, in one-letter code: Bifunctional protein FolD (296 aa).

NADP(+) is bound by residues 166-168 (GRS), Ser195, and Thr236.

The protein belongs to the tetrahydrofolate dehydrogenase/cyclohydrolase family. As to quaternary structure, homodimer.

It catalyses the reaction (6R)-5,10-methylene-5,6,7,8-tetrahydrofolate + NADP(+) = (6R)-5,10-methenyltetrahydrofolate + NADPH. The enzyme catalyses (6R)-5,10-methenyltetrahydrofolate + H2O = (6R)-10-formyltetrahydrofolate + H(+). Its pathway is one-carbon metabolism; tetrahydrofolate interconversion. Its function is as follows. Catalyzes the oxidation of 5,10-methylenetetrahydrofolate to 5,10-methenyltetrahydrofolate and then the hydrolysis of 5,10-methenyltetrahydrofolate to 10-formyltetrahydrofolate. The protein is Bifunctional protein FolD of Dehalococcoides mccartyi (strain ATCC BAA-2266 / KCTC 15142 / 195) (Dehalococcoides ethenogenes (strain 195)).